Consider the following 128-residue polypeptide: uncharacterized protein (128 aa).

It belongs to the HesB/IscA family.

This is an uncharacterized protein from Buchnera aphidicola subsp. Baizongia pistaciae (strain Bp).